The following is a 194-amino-acid chain: MKIYLASGNVNKKREVQELLPSHTIVLPKDEGIEFDPEETGSTFFENAMIKAKALYHIVKAPVLADDSGLCVDFLNGAPGIHSARYGSIEGEHVSAEAGINKVLSELKGVKDRSARFACCMVCLLDENRFYSVQETCEGHITEAPSGSGGFGYDPIFFVEKFGKTFAELTSEQKNSISHRGRALFSISRFIKGS.

A substrate-binding site is contributed by 7–12 (SGNVNK). Positions 38 and 67 each coordinate Mg(2+). The active-site Proton acceptor is the D67. Residues S68, 151-154 (FGYD), K174, and 179-180 (HR) each bind substrate.

This sequence belongs to the HAM1 NTPase family. Homodimer. Requires Mg(2+) as cofactor.

The catalysed reaction is XTP + H2O = XMP + diphosphate + H(+). It catalyses the reaction dITP + H2O = dIMP + diphosphate + H(+). The enzyme catalyses ITP + H2O = IMP + diphosphate + H(+). Its function is as follows. Pyrophosphatase that catalyzes the hydrolysis of nucleoside triphosphates to their monophosphate derivatives, with a high preference for the non-canonical purine nucleotides XTP (xanthosine triphosphate), dITP (deoxyinosine triphosphate) and ITP. Seems to function as a house-cleaning enzyme that removes non-canonical purine nucleotides from the nucleotide pool, thus preventing their incorporation into DNA/RNA and avoiding chromosomal lesions. The chain is dITP/XTP pyrophosphatase from Treponema denticola (strain ATCC 35405 / DSM 14222 / CIP 103919 / JCM 8153 / KCTC 15104).